The primary structure comprises 328 residues: tRNA uridine(34) hydroxylase (328 aa).

The Rhodanese domain occupies 130-224 (LDKDTVVLDT…YGKDPEVQGE (95 aa)). The active-site Cysteine persulfide intermediate is Cys184.

The protein belongs to the TrhO family.

The enzyme catalyses uridine(34) in tRNA + AH2 + O2 = 5-hydroxyuridine(34) in tRNA + A + H2O. Its function is as follows. Catalyzes oxygen-dependent 5-hydroxyuridine (ho5U) modification at position 34 in tRNAs. In Streptococcus pneumoniae (strain Hungary19A-6), this protein is tRNA uridine(34) hydroxylase.